Reading from the N-terminus, the 438-residue chain is tRNA-2-methylthio-N(6)-dimethylallyladenosine synthase (438 aa).

Residues 4–120 enclose the MTTase N-terminal domain; it reads KKLYIDTVGC…VPEMVKDAEA (117 aa). Residues Cys-13, Cys-49, Cys-83, Cys-158, Cys-162, and Cys-165 each coordinate [4Fe-4S] cluster. Positions 144–377 constitute a Radical SAM core domain; it reads GRKRVSAFVT…QAVHSRIHNE (234 aa). Positions 377 to 438 constitute a TRAM domain; it reads ETYVGSTQQV…YANSLLGELL (62 aa).

This sequence belongs to the methylthiotransferase family. MiaB subfamily. Monomer. It depends on [4Fe-4S] cluster as a cofactor.

The protein resides in the cytoplasm. It catalyses the reaction N(6)-dimethylallyladenosine(37) in tRNA + (sulfur carrier)-SH + AH2 + 2 S-adenosyl-L-methionine = 2-methylsulfanyl-N(6)-dimethylallyladenosine(37) in tRNA + (sulfur carrier)-H + 5'-deoxyadenosine + L-methionine + A + S-adenosyl-L-homocysteine + 2 H(+). Catalyzes the methylthiolation of N6-(dimethylallyl)adenosine (i(6)A), leading to the formation of 2-methylthio-N6-(dimethylallyl)adenosine (ms(2)i(6)A) at position 37 in tRNAs that read codons beginning with uridine. The sequence is that of tRNA-2-methylthio-N(6)-dimethylallyladenosine synthase from Trichlorobacter lovleyi (strain ATCC BAA-1151 / DSM 17278 / SZ) (Geobacter lovleyi).